The sequence spans 61 residues: Chi-conotoxin MrIA (61 aa).

The signal sequence occupies residues 1–19 (MRCLPVLIILLLLTASAPG). The propeptide occupies 20–48 (VVVLPKTEDDVPMSSVYGNGKSILRGILR). 2 disulfide bridges follow: Cys-52–Cys-61 and Cys-53–Cys-58. 4-hydroxyproline is present on Pro-60.

Belongs to the conotoxin T superfamily. In terms of tissue distribution, expressed by the venom duct.

The protein resides in the secreted. In terms of biological role, chi-conotoxins inhibit the neuronal noradrenaline transporter (NET/SLC6A2). Activity has been described on both human (inhibition of norepinephrine uptake is IC(50)=1.26 uM) and rat (pIC(50)=6.21 corresponding IC(50)=0.16 uM) transporters. Acts as a reversible non-competitive inhibitor. This Conus marmoreus (Marble cone) protein is Chi-conotoxin MrIA.